Reading from the N-terminus, the 879-residue chain is MTTTAPFLTGNQIRDRFLQFYAQHNHQILPSASLVPEDPTVLLTIAGMLPFKPIFLGQKQPDFPRATTSQKCIRTNDIENVGRTARHHTFFEMLGNFSFGDYFKEQAIKWAWELSTKVYRLPPENIVVSVFEKDDEAFKLWEEMIGIPPQRIKRMGEKDNFWKAGPTGPCGPCSELYYDFHPELGEDNIDLEDDSRFIEFYNLVFMEYNRDAEGNLAPLQNKNIDTGMGLERMAQILQKVPNNYETDLIFPIIETAANIANIDYQKATEKTKVSLKVIGDHVRSVVHMIADGITASNTDRGYVLRRLIRRVVRHGRLIGIEGQFIKQVAETAIELSENAYPQVRERESFIKGELEREETAFLKTLERGEKLLAEIIEKTETQGQISGVDAFTLYDTYGFPLELTQEIAEESNLTVNIEEFEAEMRQQQERSKAAHETIDLTVQGSLDKLAEHIHPTAFLGYTDLQLTAKVEAVLIQGKTVDTAEAGSEVQIVLDQTPFYGESGGQIGDRGFLTGENLVIRVEDVQKESGIFVHFGRVERGSVSVNDQVTATIDRACRRQVQANHTATHLLQAALKKVVDKSISQAGSLVAFDRLRFDFNCPRAVTSEELQEIEDLINTWIAEAHETEIAVMPIETAKEKGAIAMFGEKYGSEVRVIDVPGVSMELCGGTHVKNTAEIGLFKIMSESGISSGVRRIEAVAGPAVLEYLKVRETVVKDLCDRFKIKPEEISDRITTLQSELKTTQKELEAVKQDLAVAKSDQLLTEAESIGEFKLLVSDMGEMDAKALQTAAERLQQKLGEGAVILGSIPSEGKVSLVAAFSKKVNQEKQLQAGKFIGQIAKICGGGGGGRPNLAQAGGREPSKLSEALLTAKEQLTESLK.

Positions 564, 568, 666, and 670 each coordinate Zn(2+).

It belongs to the class-II aminoacyl-tRNA synthetase family. Zn(2+) serves as cofactor.

Its subcellular location is the cytoplasm. It carries out the reaction tRNA(Ala) + L-alanine + ATP = L-alanyl-tRNA(Ala) + AMP + diphosphate. Catalyzes the attachment of alanine to tRNA(Ala) in a two-step reaction: alanine is first activated by ATP to form Ala-AMP and then transferred to the acceptor end of tRNA(Ala). Also edits incorrectly charged Ser-tRNA(Ala) and Gly-tRNA(Ala) via its editing domain. The chain is Alanine--tRNA ligase from Crocosphaera subtropica (strain ATCC 51142 / BH68) (Cyanothece sp. (strain ATCC 51142)).